The following is a 335-amino-acid chain: Delta(7)-sterol 5(6)-desaturase erg3B (335 aa).

Helical transmembrane passes span 74–94 (IWAF…ALVF), 113–133 (IGQA…LFLA), and 152–172 (LYTY…IYWI). The 125-residue stretch at 160-284 (LFIAFTDFAI…FITFWDRIGG (125 aa)) folds into the Fatty acid hydroxylase domain. Positions 173 to 177 (HRGLH) match the Histidine box-1 motif. The Histidine box-2 motif lies at 186 to 190 (HKPHH). Residues 219–239 (PFLFPLQKAAYLGLFVFVTIW) traverse the membrane as a helical segment. Asn256 carries an N-linked (GlcNAc...) asparagine glycan. Positions 261 to 265 (HTIHH) match the Histidine box-3 motif.

Belongs to the sterol desaturase family. Fe cation is required as a cofactor.

It is found in the endoplasmic reticulum membrane. It participates in steroid metabolism; ergosterol biosynthesis. Functionally, delta(7)-sterol 5(6)-desaturase; part of the third module of ergosterol biosynthesis pathway that includes the late steps of the pathway. Erg3B catalyzes the introduction of a C-5 double bond in the B ring to produce 5-dehydroepisterol. The third module or late pathway involves the ergosterol synthesis itself through consecutive reactions that mainly occur in the endoplasmic reticulum (ER) membrane. Firstly, the squalene synthase erg9 catalyzes the condensation of 2 farnesyl pyrophosphate moieties to form squalene, which is the precursor of all steroids. Squalene synthase is crucial for balancing the incorporation of farnesyl diphosphate (FPP) into sterol and nonsterol isoprene synthesis. Secondly, squalene is converted into lanosterol by the consecutive action of the squalene epoxidase erg1 and the lanosterol synthase erg7. Then, the delta(24)-sterol C-methyltransferase erg6 methylates lanosterol at C-24 to produce eburicol. Eburicol is the substrate of the sterol 14-alpha demethylase encoded by cyp51A and cyp51B, to yield 4,4,24-trimethyl ergosta-8,14,24(28)-trienol. The C-14 reductase erg24 then reduces the C14=C15 double bond which leads to 4,4-dimethylfecosterol. A sequence of further demethylations at C-4, involving the C-4 demethylation complex containing the C-4 methylsterol oxidases erg25A or erg25B, the sterol-4-alpha-carboxylate 3-dehydrogenase erg26 and the 3-keto-steroid reductase erg27, leads to the production of fecosterol via 4-methylfecosterol. The C-8 sterol isomerase erg2 then catalyzes the reaction which results in unsaturation at C-7 in the B ring of sterols and thus converts fecosterol to episterol. The sterol-C5-desaturase erg3B then catalyzes the introduction of a C-5 double bond in the B ring to produce 5-dehydroepisterol. The 2 other sterol-C5-desaturases, erg3A and erg3C, seem to be less important in ergosterol biosynthesis. The C-22 sterol desaturase erg5 further converts 5-dehydroepisterol into ergosta-5,7,22,24(28)-tetraen-3beta-ol by forming the C-22(23) double bond in the sterol side chain. Finally, ergosta-5,7,22,24(28)-tetraen-3beta-ol is substrate of the C-24(28) sterol reductases erg4A and erg4B to produce ergosterol. Possible alternative sterol biosynthetic pathways might exist from fecosterol to ergosterol, depending on the activities of the erg3 isoforms. This Aspergillus fumigatus (strain ATCC MYA-4609 / CBS 101355 / FGSC A1100 / Af293) (Neosartorya fumigata) protein is Delta(7)-sterol 5(6)-desaturase erg3B.